Here is a 146-residue protein sequence, read N- to C-terminus: Flagellar assembly factor FliW 1 (146 aa).

This sequence belongs to the FliW family. As to quaternary structure, interacts with translational regulator CsrA and flagellin(s).

The protein resides in the cytoplasm. In terms of biological role, acts as an anti-CsrA protein, binds CsrA and prevents it from repressing translation of its target genes, one of which is flagellin. Binds to flagellin and participates in the assembly of the flagellum. This Helicobacter hepaticus (strain ATCC 51449 / 3B1) protein is Flagellar assembly factor FliW 1.